An 858-amino-acid chain; its full sequence is Conidiophore development regulator abaA (858 aa).

Positions Met-1 to Asp-22 are disordered. The TEA DNA-binding region spans Gln-128–Leu-221. Residues Val-500–Gly-522 show a composition bias toward basic and acidic residues. Disordered regions lie at residues Val-500–Ala-535 and Thr-792–Trp-858. A Nuclear localization signal motif is present at residues Asp-514–Ala-521. A compositionally biased stretch (polar residues) spans Ser-809 to Ala-822.

It belongs to the TEC1 family.

Its subcellular location is the nucleus. Functionally, abaA and wetA are pivotal regulators of conidiophore development and conidium maturation. They act individually and together to regulate their own expression and that of numerous other sporulation-specific genes. Binds to the sequence 5'-CATTCY-3', where Y is a pyrimidine, making both major- and minor-groove contacts. Plays a pivotal role in conidiation by regulating cell cycle pathways and other conidiation-related genes. In Gibberella zeae (strain ATCC MYA-4620 / CBS 123657 / FGSC 9075 / NRRL 31084 / PH-1) (Wheat head blight fungus), this protein is Conidiophore development regulator abaA.